We begin with the raw amino-acid sequence, 69 residues long: Probable cold shock protein y4cH (69 aa).

The CSD domain occupies 5 to 65 (GTVKWFNATK…DRKSGKMSAD (61 aa)).

The protein resides in the cytoplasm. This Sinorhizobium fredii (strain NBRC 101917 / NGR234) protein is Probable cold shock protein y4cH.